A 154-amino-acid chain; its full sequence is Interleukin-7 (154 aa).

Residues methionine 1–serine 25 form the signal peptide. 3 disulfide bridges follow: cysteine 27–cysteine 145, cysteine 58–cysteine 133, and cysteine 71–cysteine 116. Asparagine 94 and asparagine 115 each carry an N-linked (GlcNAc...) asparagine glycan.

The protein belongs to the IL-7/IL-9 family. As to quaternary structure, interacts with IL7R and CSF2RG. In terms of processing, three disulfide bonds are present.

The protein resides in the secreted. In terms of biological role, hematopoietic cytokine that plays an essential role in the development, expansion, and survival of naive and memory T-cells and B-cells thereby regulating the number of mature lymphocytes and maintaining lymphoid homeostasis. Mechanistically, exerts its biological effects through a receptor composed of IL7RA subunit and the cytokine receptor common subunit gamma/CSF2RG. Binding to the receptor leads to activation of various kinases including JAK1 or JAK3 depending on the cell type and subsequently propagation of signals through activation of several downstream signaling pathways including the PI3K/Akt/mTOR or the JAK-STAT5. The sequence is that of Interleukin-7 (Il7) from Mus musculus (Mouse).